A 429-amino-acid polypeptide reads, in one-letter code: Tryptophan synthase beta chain 2 (429 aa).

The segment at 18–40 is disordered; it reads NINPDLPSPLPEPKNPEGGKNIE. At lysine 110 the chain carries N6-(pyridoxal phosphate)lysine.

This sequence belongs to the TrpB family. In terms of assembly, tetramer of two alpha and two beta chains. Pyridoxal 5'-phosphate serves as cofactor.

The catalysed reaction is (1S,2R)-1-C-(indol-3-yl)glycerol 3-phosphate + L-serine = D-glyceraldehyde 3-phosphate + L-tryptophan + H2O. Its pathway is amino-acid biosynthesis; L-tryptophan biosynthesis; L-tryptophan from chorismate: step 5/5. The beta subunit is responsible for the synthesis of L-tryptophan from indole and L-serine. The chain is Tryptophan synthase beta chain 2 (trpB2) from Methanothermobacter thermautotrophicus (strain ATCC 29096 / DSM 1053 / JCM 10044 / NBRC 100330 / Delta H) (Methanobacterium thermoautotrophicum).